Consider the following 1083-residue polypeptide: Probable arabinosyltransferase B (1083 aa).

The next 13 membrane-spanning stretches (helical) occupy residues 23–45 (VARWVAAIAGLIGFVSSVVTPLL), 222–239 (FAMMLAIITTVGALVALW), 252–274 (LIPARWSMFTLVDVAVIFGFLLW), 331–350 (SMWIRLPDLICGVACWLLLS), 357–379 (LGPAIVGFKPALWAAGLVLLAAW), 421–443 (TAAFTIGIQPTGLIAVAALLAGG), 456–478 (AVGAWPLVAPLLAAGTVVLTVVF), 525–542 (FGFLITALCLFTAVLITL), 555–572 (AWRLIGTILGTMFFLTFA), 576–598 (WVHHFGLFAALGAAVAALTTVLV), 611–633 (AFLAALLFVMTLCFATTNGWWYV), 648–670 (DGITFSTIFFILFAIVALYAYYL), and 690–712 (FWAPIPFAAGLMTLVFIGSMVAG).

Belongs to the emb family.

It is found in the cell membrane. Functionally, arabinosyl transferase responsible for the polymerization of arabinose into the arabinan of arabinogalactan. The protein is Probable arabinosyltransferase B (embB) of Mycobacterium leprae (strain TN).